The following is a 332-amino-acid chain: Ketol-acid reductoisomerase (NADP(+)) (332 aa).

The 182-residue stretch at 1–182 (MAVIYYDKDC…GSNRAGILET (182 aa)) folds into the KARI N-terminal Rossmann domain. Residues 25–28 (YGAQ) and 83–86 (DTSQ) each bind NADP(+). H108 is a catalytic residue. G134 contributes to the NADP(+) binding site. A KARI C-terminal knotted domain is found at 183–328 (TFAEETETDL…AELRSMMSWL (146 aa)). D191, E195, E227, and E231 together coordinate Mg(2+). Residue S252 participates in substrate binding.

This sequence belongs to the ketol-acid reductoisomerase family. Mg(2+) serves as cofactor.

It carries out the reaction (2R)-2,3-dihydroxy-3-methylbutanoate + NADP(+) = (2S)-2-acetolactate + NADPH + H(+). It catalyses the reaction (2R,3R)-2,3-dihydroxy-3-methylpentanoate + NADP(+) = (S)-2-ethyl-2-hydroxy-3-oxobutanoate + NADPH + H(+). The protein operates within amino-acid biosynthesis; L-isoleucine biosynthesis; L-isoleucine from 2-oxobutanoate: step 2/4. It functions in the pathway amino-acid biosynthesis; L-valine biosynthesis; L-valine from pyruvate: step 2/4. Functionally, involved in the biosynthesis of branched-chain amino acids (BCAA). Catalyzes an alkyl-migration followed by a ketol-acid reduction of (S)-2-acetolactate (S2AL) to yield (R)-2,3-dihydroxy-isovalerate. In the isomerase reaction, S2AL is rearranged via a Mg-dependent methyl migration to produce 3-hydroxy-3-methyl-2-ketobutyrate (HMKB). In the reductase reaction, this 2-ketoacid undergoes a metal-dependent reduction by NADPH to yield (R)-2,3-dihydroxy-isovalerate. The protein is Ketol-acid reductoisomerase (NADP(+)) of Dehalococcoides mccartyi (strain CBDB1).